A 577-amino-acid chain; its full sequence is Urease subunit alpha (577 aa).

A Urease domain is found at 136–577 (GAIDCHVHLI…LPMAQRYFLF (442 aa)). Residues H141, H143, and K224 each coordinate Ni(2+). N6-carboxylysine is present on K224. H226 contacts substrate. H253 and H279 together coordinate Ni(2+). Residue H327 is the Proton donor of the active site. D367 is a binding site for Ni(2+).

It belongs to the metallo-dependent hydrolases superfamily. Urease alpha subunit family. As to quaternary structure, heterotrimer of UreA (gamma), UreB (beta) and UreC (alpha) subunits. Three heterotrimers associate to form the active enzyme. Ni cation is required as a cofactor. In terms of processing, carboxylation allows a single lysine to coordinate two nickel ions.

It localises to the cytoplasm. It carries out the reaction urea + 2 H2O + H(+) = hydrogencarbonate + 2 NH4(+). It participates in nitrogen metabolism; urea degradation; CO(2) and NH(3) from urea (urease route): step 1/1. The protein is Urease subunit alpha of Mycobacterium ulcerans (strain Agy99).